A 293-amino-acid polypeptide reads, in one-letter code: Ribosomal protein L11 methyltransferase (293 aa).

The S-adenosyl-L-methionine site is built by threonine 145, glycine 166, aspartate 188, and asparagine 230.

Belongs to the methyltransferase superfamily. PrmA family.

It localises to the cytoplasm. The catalysed reaction is L-lysyl-[protein] + 3 S-adenosyl-L-methionine = N(6),N(6),N(6)-trimethyl-L-lysyl-[protein] + 3 S-adenosyl-L-homocysteine + 3 H(+). In terms of biological role, methylates ribosomal protein L11. This is Ribosomal protein L11 methyltransferase from Erwinia tasmaniensis (strain DSM 17950 / CFBP 7177 / CIP 109463 / NCPPB 4357 / Et1/99).